We begin with the raw amino-acid sequence, 200 residues long: ATP-dependent Clp protease proteolytic subunit (200 aa).

S99 functions as the Nucleophile in the catalytic mechanism. Residue H124 is part of the active site.

The protein belongs to the peptidase S14 family. Fourteen ClpP subunits assemble into 2 heptameric rings which stack back to back to give a disk-like structure with a central cavity, resembling the structure of eukaryotic proteasomes.

It localises to the cytoplasm. It catalyses the reaction Hydrolysis of proteins to small peptides in the presence of ATP and magnesium. alpha-casein is the usual test substrate. In the absence of ATP, only oligopeptides shorter than five residues are hydrolyzed (such as succinyl-Leu-Tyr-|-NHMec, and Leu-Tyr-Leu-|-Tyr-Trp, in which cleavage of the -Tyr-|-Leu- and -Tyr-|-Trp bonds also occurs).. Its function is as follows. Cleaves peptides in various proteins in a process that requires ATP hydrolysis. Has a chymotrypsin-like activity. Plays a major role in the degradation of misfolded proteins. This is ATP-dependent Clp protease proteolytic subunit from Syntrophomonas wolfei subsp. wolfei (strain DSM 2245B / Goettingen).